The sequence spans 311 residues: Dof zinc finger protein DOF1.4 (311 aa).

Residues 1-12 (MQSKNMIVASSH) are compositionally biased toward polar residues. Residues 1 to 29 (MQSKNMIVASSHQQQQQQQPQQPQPQLKC) form a disordered region. Over residues 13–26 (QQQQQQQPQQPQPQ) the composition is skewed to low complexity. The Dof-type zinc finger occupies 27–81 (LKCPRCDSSNTKFCYYNNYSLSQPRHFCKACKRYWTRGGTLRNVPVGGSYRKNKR). 4 residues coordinate Zn(2+): Cys-29, Cys-32, Cys-54, and Cys-57. Positions 72-110 (VGGSYRKNKRVKRPSTATTTTASTVSTTNSSSPNNPHQI) are disordered. Over residues 85–107 (PSTATTTTASTVSTTNSSSPNNP) the composition is skewed to low complexity.

The protein resides in the nucleus. Functionally, transcription factor that binds specifically to a 5'-AA[AG]G-3' consensus core sequence. The sequence is that of Dof zinc finger protein DOF1.4 (DOF1.4) from Arabidopsis thaliana (Mouse-ear cress).